Reading from the N-terminus, the 306-residue chain is Ribonuclease Z (306 aa).

Residues His63, His65, Asp67, His68, His140, Asp211, and His269 each coordinate Zn(2+). Asp67 acts as the Proton acceptor in catalysis.

The protein belongs to the RNase Z family. Homodimer. Zn(2+) is required as a cofactor.

The enzyme catalyses Endonucleolytic cleavage of RNA, removing extra 3' nucleotides from tRNA precursor, generating 3' termini of tRNAs. A 3'-hydroxy group is left at the tRNA terminus and a 5'-phosphoryl group is left at the trailer molecule.. In terms of biological role, zinc phosphodiesterase, which displays some tRNA 3'-processing endonuclease activity. Probably involved in tRNA maturation, by removing a 3'-trailer from precursor tRNA. The sequence is that of Ribonuclease Z from Listeria monocytogenes serovar 1/2a (strain ATCC BAA-679 / EGD-e).